The chain runs to 326 residues: Probable cell division protein WhiA (326 aa).

The segment at residues 275–308 (SLEELGQLAEPPMTKDAVAGRIRRLLAMADKRAR) is a DNA-binding region (H-T-H motif).

This sequence belongs to the WhiA family.

Functionally, involved in cell division and chromosome segregation. The protein is Probable cell division protein WhiA of Saccharopolyspora erythraea (strain ATCC 11635 / DSM 40517 / JCM 4748 / NBRC 13426 / NCIMB 8594 / NRRL 2338).